A 249-amino-acid chain; its full sequence is 5'-nucleotidase SurE (249 aa).

A divalent metal cation contacts are provided by Asp-8, Asp-9, Ser-39, and Asn-91.

This sequence belongs to the SurE nucleotidase family. A divalent metal cation serves as cofactor.

Its subcellular location is the cytoplasm. It catalyses the reaction a ribonucleoside 5'-phosphate + H2O = a ribonucleoside + phosphate. Its function is as follows. Nucleotidase that shows phosphatase activity on nucleoside 5'-monophosphates. The sequence is that of 5'-nucleotidase SurE from Pseudomonas putida (strain ATCC 700007 / DSM 6899 / JCM 31910 / BCRC 17059 / LMG 24140 / F1).